Here is a 470-residue protein sequence, read N- to C-terminus: Neuraminidase (470 aa).

At 1–14 (MNPNQKIITIGSVS) the chain is on the intravirion side. The interval 11–32 (GSVSLGLVVLNILLHIVSITIT) is involved in apical transport and lipid raft association. The helical transmembrane segment at 15 to 35 (LGLVVLNILLHIVSITITVLV) threads the bilayer. Residues 32-86 (TVLVLPGNGNNGSCNETVIREYNETVRIEKITQWHNTNVIEYIERPESDHFMNNT) are hypervariable stalk region. The Virion surface segment spans residues 36 to 470 (LPGNGNNGSC…AILPFDIDKM (435 aa)). N-linked (GlcNAc...) asparagine; by host glycans are attached at residues Asn-42, Asn-46, Asn-54, and Asn-84. The segment at 89 to 470 (LCDAKGFAPF…AILPFDIDKM (382 aa)) is head of neuraminidase. 8 disulfides stabilise this stretch: Cys-90–Cys-417, Cys-122–Cys-127, Cys-182–Cys-229, Cys-231–Cys-236, Cys-277–Cys-290, Cys-279–Cys-288, Cys-316–Cys-335, and Cys-421–Cys-446. Arg-116 is a substrate binding site. N-linked (GlcNAc...) asparagine; by host glycosylation is present at Asn-144. The active-site Proton donor/acceptor is the Asp-149. Position 150 (Arg-150) interacts with substrate. A substrate-binding site is contributed by 275–276 (EE). Position 291 (Arg-291) interacts with substrate. Residue Asp-292 coordinates Ca(2+). Asn-293 carries N-linked (GlcNAc...) asparagine; by host glycosylation. Gly-296 and Asp-322 together coordinate Ca(2+). Arg-368 is a substrate binding site. Asn-398 is a glycosylation site (N-linked (GlcNAc...) asparagine; by host). Catalysis depends on Tyr-402, which acts as the Nucleophile.

This sequence belongs to the glycosyl hydrolase 34 family. Homotetramer. It depends on Ca(2+) as a cofactor. Post-translationally, N-glycosylated.

The protein localises to the virion membrane. It is found in the host apical cell membrane. It carries out the reaction Hydrolysis of alpha-(2-&gt;3)-, alpha-(2-&gt;6)-, alpha-(2-&gt;8)- glycosidic linkages of terminal sialic acid residues in oligosaccharides, glycoproteins, glycolipids, colominic acid and synthetic substrates.. Its activity is regulated as follows. Inhibited by the neuraminidase inhibitors zanamivir (Relenza) and oseltamivir (Tamiflu). These drugs interfere with the release of progeny virus from infected cells and are effective against all influenza strains. Resistance to neuraminidase inhibitors is quite rare. Its function is as follows. Catalyzes the removal of terminal sialic acid residues from viral and cellular glycoconjugates. Cleaves off the terminal sialic acids on the glycosylated HA during virus budding to facilitate virus release. Additionally helps virus spread through the circulation by further removing sialic acids from the cell surface. These cleavages prevent self-aggregation and ensure the efficient spread of the progeny virus from cell to cell. Otherwise, infection would be limited to one round of replication. Described as a receptor-destroying enzyme because it cleaves a terminal sialic acid from the cellular receptors. May facilitate viral invasion of the upper airways by cleaving the sialic acid moieties on the mucin of the airway epithelial cells. Likely to plays a role in the budding process through its association with lipid rafts during intracellular transport. May additionally display a raft-association independent effect on budding. Plays a role in the determination of host range restriction on replication and virulence. Sialidase activity in late endosome/lysosome traffic seems to enhance virus replication. The polypeptide is Neuraminidase (Influenza A virus (strain A/Guinea fowl/New York/4-3587/1984 H3N8)).